Reading from the N-terminus, the 422-residue chain is Phospho-N-acetylmuramoyl-pentapeptide-transferase (422 aa).

Transmembrane regions (helical) follow at residues Leu28–Leu48, Val71–Leu91, Leu95–Phe115, Ile136–Val156, Ala211–Ala231, Ala246–Gly266, Leu279–Tyr299, Ile313–Leu333, and Lys399–Leu419.

The protein belongs to the glycosyltransferase 4 family. MraY subfamily. Requires Mg(2+) as cofactor.

It localises to the cell inner membrane. The catalysed reaction is UDP-N-acetyl-alpha-D-muramoyl-L-alanyl-gamma-D-glutamyl-meso-2,6-diaminopimeloyl-D-alanyl-D-alanine + di-trans,octa-cis-undecaprenyl phosphate = di-trans,octa-cis-undecaprenyl diphospho-N-acetyl-alpha-D-muramoyl-L-alanyl-D-glutamyl-meso-2,6-diaminopimeloyl-D-alanyl-D-alanine + UMP. Its pathway is cell wall biogenesis; peptidoglycan biosynthesis. Functionally, catalyzes the initial step of the lipid cycle reactions in the biosynthesis of the cell wall peptidoglycan: transfers peptidoglycan precursor phospho-MurNAc-pentapeptide from UDP-MurNAc-pentapeptide onto the lipid carrier undecaprenyl phosphate, yielding undecaprenyl-pyrophosphoryl-MurNAc-pentapeptide, known as lipid I. In Bacteroides fragilis (strain ATCC 25285 / DSM 2151 / CCUG 4856 / JCM 11019 / LMG 10263 / NCTC 9343 / Onslow / VPI 2553 / EN-2), this protein is Phospho-N-acetylmuramoyl-pentapeptide-transferase.